A 484-amino-acid polypeptide reads, in one-letter code: ATP-dependent rRNA helicase RRP3 (484 aa).

2 stretches are compositionally biased toward low complexity: residues 1-14 and 22-34; these read MPSPSPEASSSMSQ and PSPASSNPDAPEA. Positions 1 to 38 are disordered; it reads MPSPSPEASSSMSQPGPPSRSPSPASSNPDAPEASHNK. Residues 38–66 carry the Q motif motif; the sequence is KTFADLGISPELCRACASMGFKKPSDIQA. Residues 69 to 240 enclose the Helicase ATP-binding domain; the sequence is IPHALEGKDI…RASLNKPVRV (172 aa). ATP is bound at residue 82–89; the sequence is AQTGSGKT. The DEAD box signature appears at 188–191; it reads DEAD. Positions 263–411 constitute a Helicase C-terminal domain; it reads NKDAYLLYLA…SFDVDKEAVA (149 aa). The disordered stretch occupies residues 425–484; sequence ALEMRESGTGGGGGKRGRDKGKRKTFGDGDDRDRDDDVVEAGVPRKKNKFTPGGKKKARK. 2 stretches are compositionally biased toward basic residues: residues 439–448 and 468–484; these read KRGRDKGKRK and PRKKNKFTPGGKKKARK.

It belongs to the DEAD box helicase family. DDX47/RRP3 subfamily. As to quaternary structure, interacts with the SSU processome.

Its subcellular location is the nucleus. The catalysed reaction is ATP + H2O = ADP + phosphate + H(+). In terms of biological role, ATP-dependent rRNA helicase required for pre-ribosomal RNA processing. Involved in the maturation of the 35S-pre-rRNA and to its cleavage to mature 18S rRNA. In Cryptococcus neoformans var. neoformans serotype D (strain B-3501A) (Filobasidiella neoformans), this protein is ATP-dependent rRNA helicase RRP3.